The primary structure comprises 438 residues: tRNA(Ile)-lysidine synthase (438 aa).

26–31 contributes to the ATP binding site; it reads SGGADS.

It belongs to the tRNA(Ile)-lysidine synthase family.

The protein localises to the cytoplasm. The enzyme catalyses cytidine(34) in tRNA(Ile2) + L-lysine + ATP = lysidine(34) in tRNA(Ile2) + AMP + diphosphate + H(+). Functionally, ligates lysine onto the cytidine present at position 34 of the AUA codon-specific tRNA(Ile) that contains the anticodon CAU, in an ATP-dependent manner. Cytidine is converted to lysidine, thus changing the amino acid specificity of the tRNA from methionine to isoleucine. This is tRNA(Ile)-lysidine synthase from Parabacteroides distasonis (strain ATCC 8503 / DSM 20701 / CIP 104284 / JCM 5825 / NCTC 11152).